The sequence spans 363 residues: 5-formaminoimidazole-4-carboxamide-1-(beta)-D-ribofuranosyl 5'-monophosphate synthetase (363 aa).

Residues His-29 and Ser-96 each contribute to the 5-amino-1-(5-phospho-beta-D-ribosyl)imidazole-4-carboxamide site. Positions 118-354 constitute an ATP-grasp domain; it reads RDILRWEAER…IALEIKNAIK (237 aa). Residues 148 to 210 and Glu-232 each bind ATP; that span reads PSEI…CNYC. Asn-260 contacts 5-amino-1-(5-phospho-beta-D-ribosyl)imidazole-4-carboxamide. 2 residues coordinate Mg(2+): Gln-299 and Glu-312.

The protein belongs to the phosphohexose mutase family. It depends on Mg(2+) as a cofactor. Mn(2+) is required as a cofactor.

It carries out the reaction 5-amino-1-(5-phospho-beta-D-ribosyl)imidazole-4-carboxamide + formate + ATP = 5-formamido-1-(5-phospho-D-ribosyl)imidazole-4-carboxamide + ADP + phosphate. Its pathway is purine metabolism; IMP biosynthesis via de novo pathway; 5-formamido-1-(5-phospho-D-ribosyl)imidazole-4-carboxamide from 5-amino-1-(5-phospho-D-ribosyl)imidazole-4-carboxamide (formate route): step 1/1. Functionally, catalyzes the ATP- and formate-dependent formylation of 5-aminoimidazole-4-carboxamide-1-beta-d-ribofuranosyl 5'-monophosphate (AICAR) to 5-formaminoimidazole-4-carboxamide-1-beta-d-ribofuranosyl 5'-monophosphate (FAICAR) in the absence of folates. In Methanobrevibacter smithii (strain ATCC 35061 / DSM 861 / OCM 144 / PS), this protein is 5-formaminoimidazole-4-carboxamide-1-(beta)-D-ribofuranosyl 5'-monophosphate synthetase.